Reading from the N-terminus, the 194-residue chain is Dihydrofolate reductase HdrB (194 aa).

The DHFR domain occupies 18–194 (RFVLVAAVAD…ADRGAEESDE (177 aa)). Residues Ala-24 and 30–36 (VIGRDGT) each bind NADP(+). Substrate is bound at residue Asp-44. Residue 62-63 (KT) coordinates NADP(+). Arg-69 and Arg-78 together coordinate substrate. Residues 84–85 (TT) and 123–130 (GGATVYEQ) each bind NADP(+). Position 141 (Thr-141) interacts with substrate. Residues 173-194 (SFVTYERKQPAAADRGAEESDE) form a disordered region.

It belongs to the dihydrofolate reductase family.

The enzyme catalyses (6S)-5,6,7,8-tetrahydrofolate + NADP(+) = 7,8-dihydrofolate + NADPH + H(+). It participates in cofactor biosynthesis; tetrahydrofolate biosynthesis; 5,6,7,8-tetrahydrofolate from 7,8-dihydrofolate: step 1/1. Maximum activity at KCl concentration of 0.5 M and activity decreases with increasing concentration of KCl. Functionally, key enzyme in folate metabolism. Catalyzes an essential reaction for de novo glycine and purine synthesis, and for DNA precursor synthesis. The sequence is that of Dihydrofolate reductase HdrB (hdrB) from Haloferax volcanii (Halobacterium volcanii).